Reading from the N-terminus, the 940-residue chain is Leucine--tRNA ligase, mitochondrial (940 aa).

Residues 54-64 (PYPSGALHMGH) carry the 'HIGH' region motif. The 'KMSKS' region signature appears at 638 to 642 (TINKL). ATP is bound at residue lysine 641. The disordered stretch occupies residues 724–744 (KEQHQHQQQQHQQPLPSSEFN).

This sequence belongs to the class-I aminoacyl-tRNA synthetase family.

The protein localises to the mitochondrion. The catalysed reaction is tRNA(Leu) + L-leucine + ATP = L-leucyl-tRNA(Leu) + AMP + diphosphate. This chain is Leucine--tRNA ligase, mitochondrial (mleuS), found in Dictyostelium discoideum (Social amoeba).